We begin with the raw amino-acid sequence, 175 residues long: Type-2 ice-structuring protein (175 aa).

The N-terminal stretch at 1 to 16 (MLAALLVCAMVALTRA) is a signal peptide. Positions 17-33 (ANGDTGKEAVMTGSSGK) are excised as a propeptide. Positions 36–163 (TECPTDWKMF…LHASVCAKPA (128 aa)) constitute a C-type lectin domain. Disulfide bonds link Cys-38/Cys-49, Cys-66/Cys-159, Cys-103/Cys-134, Cys-123/Cys-145, and Cys-135/Cys-151.

It localises to the secreted. In terms of biological role, antifreeze proteins lower the blood freezing point. The chain is Type-2 ice-structuring protein from Osmerus mordax (Rainbow smelt).